The sequence spans 121 residues: Cell division protein FtsB (121 aa).

Residues 1-6 (MRNWRW) are Cytoplasmic-facing. A helical membrane pass occupies residues 7-24 (LLLVLAVLLAWLQYRFWF). The Periplasmic segment spans residues 25 to 121 (GPGNSGEVMM…PEPIDPVDHP (97 aa)). The stretch at 31-66 (EVMMLEAQVAHQTQDNEGLRQRNQALAAEVKDLKDG) forms a coiled coil. A disordered region spans residues 92–121 (EDAPLPAPASPEAPAPPQQAPEPIDPVDHP). Positions 96–115 (LPAPASPEAPAPPQQAPEPI) are enriched in pro residues.

The protein belongs to the FtsB family. In terms of assembly, part of a complex composed of FtsB, FtsL and FtsQ.

It is found in the cell inner membrane. Essential cell division protein. May link together the upstream cell division proteins, which are predominantly cytoplasmic, with the downstream cell division proteins, which are predominantly periplasmic. The protein is Cell division protein FtsB of Xanthomonas euvesicatoria pv. vesicatoria (strain 85-10) (Xanthomonas campestris pv. vesicatoria).